Consider the following 479-residue polypeptide: Poly(A) polymerase catalytic subunit (479 aa).

Residues D202 and D204 contribute to the active site. Positions 202, 204, and 253 each coordinate Ca(2+).

This sequence belongs to the poxviridae poly(A) polymerase catalytic subunit family. Heterodimer of a large (catalytic) subunit and a small (regulatory) subunit.

It carries out the reaction RNA(n) + ATP = RNA(n)-3'-adenine ribonucleotide + diphosphate. Polymerase that creates the 3'-poly(A) tail of mRNA's. In Camelus, this protein is Poly(A) polymerase catalytic subunit (OPG063).